The primary structure comprises 93 residues: Signal recognition particle 19 kDa protein (93 aa).

Belongs to the SRP19 family. As to quaternary structure, part of the signal recognition particle protein translocation system, which is composed of SRP and FtsY. Archaeal SRP consists of a 7S RNA molecule of 300 nucleotides and two protein subunits: SRP54 and SRP19.

The protein localises to the cytoplasm. Involved in targeting and insertion of nascent membrane proteins into the cytoplasmic membrane. Binds directly to 7S RNA and mediates binding of the 54 kDa subunit of the SRP. The sequence is that of Signal recognition particle 19 kDa protein from Haloquadratum walsbyi (strain DSM 16790 / HBSQ001).